Consider the following 325-residue polypeptide: Beta-ketoacyl-[acyl-carrier-protein] synthase III (325 aa).

Catalysis depends on residues Cys119 and His252. The segment at 253–257 is ACP-binding; it reads QANIR. Asn282 is an active-site residue.

It belongs to the thiolase-like superfamily. FabH family. As to quaternary structure, homodimer.

The protein localises to the cytoplasm. It carries out the reaction malonyl-[ACP] + acetyl-CoA + H(+) = 3-oxobutanoyl-[ACP] + CO2 + CoA. It participates in lipid metabolism; fatty acid biosynthesis. Functionally, catalyzes the condensation reaction of fatty acid synthesis by the addition to an acyl acceptor of two carbons from malonyl-ACP. Catalyzes the first condensation reaction which initiates fatty acid synthesis and may therefore play a role in governing the total rate of fatty acid production. Possesses both acetoacetyl-ACP synthase and acetyl transacylase activities. Its substrate specificity determines the biosynthesis of branched-chain and/or straight-chain of fatty acids. The polypeptide is Beta-ketoacyl-[acyl-carrier-protein] synthase III (Verminephrobacter eiseniae (strain EF01-2)).